We begin with the raw amino-acid sequence, 311 residues long: Olfactory receptor 1D4 (311 aa).

At 1–25 (MDGDNQSENSQFLLLGISESPEQQQ) the chain is on the extracellular side. Asn-5 carries N-linked (GlcNAc...) asparagine glycosylation. The helical transmembrane segment at 26-49 (ILFWMFLSMYLVTVLGNVLIILAI) threads the bilayer. At 50–57 (SSDSHLHT) the chain is on the cytoplasmic side. The helical transmembrane segment at 58 to 79 (PMYFFLANLSFTDLFFVTNTIP) threads the bilayer. Residues 80–100 (KMLVNFQSQNKAISYAGCLTQ) are Extracellular-facing. Cys-97 and Cys-189 are joined by a disulfide. A helical membrane pass occupies residues 101–120 (LYFLVSLVTLDNLILAVMAY). At 121-140 (DRYVAICCPLHYVTAMSPGL) the chain is on the cytoplasmic side. Residues 141 to 158 (CVLLLSLCWGLSVLYGLL) form a helical membrane-spanning segment. Residues 159–196 (LTFLLTRVTFCGPREIHYLFCDMYILLWLACSNTHIIH) are Extracellular-facing. Residues 197–220 (TALIATGCFIFLTLLGFMTTSYVR) traverse the membrane as a helical segment. At 221-237 (IVRTILQMPSASKKYKT) the chain is on the cytoplasmic side. Residues 238–260 (FSTCASHLGVVSLFYGTLAMVYL) form a helical membrane-spanning segment. Residues 261 to 271 (QPLHTYSMKDS) are Extracellular-facing. A helical membrane pass occupies residues 272 to 291 (VATVMYAVLTPMMNPFIYSL). Residues 292–311 (RNKDMHGAPGRVLWRPFQRP) are Cytoplasmic-facing.

It belongs to the G-protein coupled receptor 1 family.

It is found in the cell membrane. Its function is as follows. Odorant receptor. In Homo sapiens (Human), this protein is Olfactory receptor 1D4 (OR1D4).